We begin with the raw amino-acid sequence, 802 residues long: Pyrophosphate-energized membrane proton pump 3 (802 aa).

6 consecutive transmembrane segments (helical) span residues 41-61 (LNVR…FYMG), 66-86 (PIIV…VYLT), 118-138 (YGTI…IYLF), 160-180 (VAAF…GMWV), 206-226 (AGGF…AILY), and 246-266 (LPLL…FAQL). Residue lysine 273 coordinates substrate. 3 residues coordinate Mg(2+): aspartate 276, aspartate 280, and aspartate 306. 5 helical membrane passes run 348-368 (FILF…IGIL), 386-406 (MVVL…TFGA), 421-441 (WLNF…FVWI), 468-491 (IIAG…VAII), and 511-531 (GGLF…AYVL). Residues aspartate 541 and asparagine 568 each coordinate Mg(2+). 4 helical membrane passes run 577–597 (FAIG…MDEV), 615–635 (VFIG…WACA), 686–706 (GALA…LGYY), and 716–736 (VVAA…LFLN). Mg(2+) contacts are provided by aspartate 743 and aspartate 773. Lysine 776 serves as a coordination point for substrate. A helical membrane pass occupies residues 782–802 (SIHVLIKMLATITLVMAPIFL).

It belongs to the H(+)-translocating pyrophosphatase (TC 3.A.10) family. K(+)-insensitive subfamily. In terms of assembly, monomer.

It is found in the golgi apparatus membrane. The catalysed reaction is diphosphate + H2O + H(+)(in) = 2 phosphate + 2 H(+)(out). The chain is Pyrophosphate-energized membrane proton pump 3 (AVPL2) from Arabidopsis thaliana (Mouse-ear cress).